Reading from the N-terminus, the 997-residue chain is NLR family CARD domain-containing protein 4 (997 aa).

Residues 1-88 (MDLIRKNYAE…FFYEDLIGQR (88 aa)) form the CARD domain. The segment at 95 to 300 (EEDLENLADH…RCGALIAETS (206 aa)) is nucleotide-binding domain (NBD). One can recognise an NACHT domain in the interval 165–478 (SPCVIEGEAG…VTKGEDFLNK (314 aa)). Residue 171–178 (GEAGKGKT) coordinates ATP. The tract at residues 358–465 (MNTQTTLFST…RLSQLLSSED (108 aa)) is winged-helix domain (WHD). LRR repeat units lie at residues 550–570 (LFSEKCLYINSHNISSHHIEF), 629–652 (NQSIQTLEVTLRDFHQLNKKDIKY), 708–731 (MTEMKTLSILNLHSEHLQGGLLEG), 735–758 (LVGLEKLVFHNIKIDKNDAKTLAE), 760–785 (ILSLKKLKRLSISHISNIGDGMESIA), 797–820 (ELKLIDCCLSAKALRSLGQSLYSL), 821–843 (SHIEILDLSGNYLLEEGKESVEE), 851–875 (LDAIRTLMLPGGTDVKFCLEAVLPT), 884–905 (ELAFKRWNLTNDDLMTLASYIN), 908–935 (FENLSFLDLSDNCAQSAGWLSLTAILQY), 937–958 (PNLTYVNFSTEDLFTPDPDLVR), and 972–994 (TMELNNWQLDDFDLAQIKKAKNM).

It localises to the cytoplasm. The protein localises to the cytosol. Functionally, key component of inflammasomes that indirectly senses specific proteins from pathogenic bacteria and fungi and responds by assembling an inflammasome complex that promotes caspase-1 activation, cytokine production and macrophage pyroptosis. This chain is NLR family CARD domain-containing protein 4 (nlrc4), found in Xenopus tropicalis (Western clawed frog).